Consider the following 206-residue polypeptide: MAANKGKSQGSLVLHKVIMVGSGGVGKSALTLQFMYDEFVEDYEPTKADSYRKKVVLDGEEVQIDILDTAGQEDYAAIRDNYFRSGEGFLLVFSITEHESFTATAEFREQILRVKAEEDKIPLLVVGNKSDLEERRQVPVEEARGKAEEWGVQYVETSAKTRANVDKVFFDLMREIRAKKMSENKDKNGRKSGKSKKSFKERCCLL.

21-29 (GSGGVGKSA) lines the GTP pocket. Positions 43–51 (YEPTKADSY) match the Effector region motif. GTP contacts are provided by residues 68–72 (DTAGQ), 128–131 (NKSD), and 158–160 (SAK). Positions 181–206 (MSENKDKNGRKSGKSKKSFKERCCLL) are disordered. Position 203 is a cysteine methyl ester (C203). C203 is lipidated: S-geranylgeranyl cysteine. Positions 204-206 (CLL) are cleaved as a propeptide — removed in mature form.

The protein belongs to the small GTPase superfamily. Ras family. In terms of assembly, interacts with EXOC2/Sec5 and EXOC8/Exo84. Interacts (via effector domain) with RALBP1. Post-translationally, prenylation is essential for membrane localization. In terms of processing, the farnesylated form confers resistance to the proapoptotic and anti-anchorage-dependent growth effects of some geranylgeranyltransferase I inhibitors.

Its subcellular location is the cell membrane. The protein localises to the midbody. It catalyses the reaction GTP + H2O = GDP + phosphate + H(+). Alternates between an inactive form bound to GDP and an active form bound to GTP. Activated by a guanine nucleotide-exchange factor (GEF) and inactivated by a GTPase-activating protein (GAP). Functionally, multifunctional GTPase involved in a variety of cellular processes including gene expression, cell migration, cell proliferation, oncogenic transformation and membrane trafficking. Accomplishes its multiple functions by interacting with distinct downstream effectors. Acts as a GTP sensor for GTP-dependent exocytosis of dense core vesicles. Required both to stabilize the assembly of the exocyst complex and to localize functional exocyst complexes to the leading edge of migrating cells. Required for suppression of apoptosis. In late stages of cytokinesis, upon completion of the bridge formation between dividing cells, mediates exocyst recruitment to the midbody to drive abscission. Involved in ligand-dependent receptor mediated endocytosis of the EGF and insulin receptors. The sequence is that of Ras-related protein Ral-B (Ralb) from Rattus norvegicus (Rat).